The following is a 99-amino-acid chain: Endothelin receptor type B (99 aa).

Topologically, residues 1–8 are extracellular; that stretch reads PFGAEMCK. A disulfide bridge links Cys7 with Cys88. Residues 9–30 form a helical membrane-spanning segment; the sequence is LVPFIQKASVGITVLSLCALSI. The Cytoplasmic portion of the chain corresponds to 31 to 51; it reads DRYRAVASWSRIKGIGIPKWT. The helical transmembrane segment at 52 to 76 threads the bilayer; sequence AVEIVLIWVVSVVLAVPEAIGFDMI. The Extracellular segment spans residues 77–99; sequence TMDYKGSYLRICLLHPVQKTAFM.

Belongs to the G-protein coupled receptor 1 family. Endothelin receptor subfamily. EDNRB sub-subfamily.

It is found in the cell membrane. In terms of biological role, non-specific receptor for endothelin 1, 2, and 3. Mediates its action by association with G proteins that activate a phosphatidylinositol-calcium second messenger system. The sequence is that of Endothelin receptor type B (EDNRB) from Macaca fascicularis (Crab-eating macaque).